Consider the following 583-residue polypeptide: CD166 antigen (583 aa).

The signal sequence occupies residues 1–27 (MESKGASSCRLLFCLLISATVFRPGLG). 2 Ig-like V-type domains span residues 28 to 120 (WYTV…TEDN) and 125 to 234 (PTIV…KTIH). The Extracellular segment spans residues 28 to 527 (WYTVNSAYGD…NREKVNDQAK (500 aa)). 2 disulfide bridges follow: C43-C113 and C157-C220. N91, N95, N167, N265, N306, N361, N457, N480, and N499 each carry an N-linked (GlcNAc...) asparagine glycan. 3 Ig-like C2-type domains span residues 245–328 (PTEQ…TAIT), 333–409 (DLSL…ESLT), and 416–501 (PQIK…LNVS). 3 cysteine pairs are disulfide-bonded: C270–C313, C354–C392, and C435–C485. A helical membrane pass occupies residues 528–549 (LIVGIVVGLLLAALVAGVVYWL). At 550-583 (YMKKSKTASKHVNKDLGNMEENKKLEENNHKTEA) the chain is on the cytoplasmic side. The interval 562 to 583 (NKDLGNMEENKKLEENNHKTEA) is disordered. Residues 569 to 583 (EENKKLEENNHKTEA) are compositionally biased toward basic and acidic residues.

Homodimer. Interacts (via extracellular domain) with CD6 (via extracellular domain). Homodimerization and interaction with CD6 involve the same region and cannot occur simultaneously. The affinity for CD6 is much higher than the affinity for self-association. Interacts (via glycosylated extracellular domain) with LGALS1 and LGALS3. Interaction with LGALS1 or LGALS3 inhibits interaction with CD6. Glycosylated. As to expression, detected on hematopoietic stem cells derived from umbilical cord blood. Detected on lymph vessel endothelial cells, skin and tonsil. Detected on peripheral blood monocytes. Detected on monocyte-derived dendritic cells (at protein level). Detected at low levels in spleen, placenta, liver. Expressed by activated T-cells, B-cells, monocytes and thymic epithelial cells. Isoform 1 and isoform 3 are detected in vein and artery endothelial cells, astrocytes, keratinocytes and artery smooth muscle cells. Expressed by neurons in the brain. Restricted expression in tumor cell lines. Detected in highly metastasizing melanoma cell lines.

The protein localises to the cell membrane. It localises to the cell projection. The protein resides in the axon. Its subcellular location is the dendrite. It is found in the secreted. Functionally, cell adhesion molecule that mediates both heterotypic cell-cell contacts via its interaction with CD6, as well as homotypic cell-cell contacts. Promotes T-cell activation and proliferation via its interactions with CD6. Contributes to the formation and maturation of the immunological synapse via its interactions with CD6. Mediates homotypic interactions with cells that express ALCAM. Acts as a ligand for the LILRB4 receptor, enhancing LILRB4-mediated inhibition of T cell proliferation. Required for normal hematopoietic stem cell engraftment in the bone marrow. Mediates attachment of dendritic cells onto endothelial cells via homotypic interaction. Inhibits endothelial cell migration and promotes endothelial tube formation via homotypic interactions. Required for normal organization of the lymph vessel network. Required for normal hematopoietic stem cell engraftment in the bone marrow. Plays a role in hematopoiesis; required for normal numbers of hematopoietic stem cells in bone marrow. Promotes in vitro osteoblast proliferation and differentiation. Promotes neurite extension, axon growth and axon guidance; axons grow preferentially on surfaces that contain ALCAM. Mediates outgrowth and pathfinding for retinal ganglion cell axons. In terms of biological role, inhibits activities of membrane-bound isoforms by competing for the same interaction partners. Inhibits cell attachment via homotypic interactions. Promotes endothelial cell migration. Inhibits endothelial cell tube formation. This Homo sapiens (Human) protein is CD166 antigen (ALCAM).